The primary structure comprises 132 residues: Transthyretin-like protein 16 (132 aa).

An N-terminal signal peptide occupies residues 1–19 (MRSLVVCLLLAACALECTA). N-linked (GlcNAc...) asparagine glycosylation is present at Asn23.

Belongs to the nematode transthyretin-like family.

The protein resides in the secreted. The sequence is that of Transthyretin-like protein 16 (ttr-16) from Caenorhabditis elegans.